Here is a 560-residue protein sequence, read N- to C-terminus: Involucrin (560 aa).

Residues 1-15 (MSQQHTLPVTLSPAL) show a composition bias toward polar residues. Disordered stretches follow at residues 1 to 131 (MSQQ…KLLD), 150 to 359 (EQLL…LVQQ), and 404 to 534 (GQLK…QSAL). The span at 76–91 (EQQQQEPQEQELQQQH) shows a compositional bias: low complexity. Basic and acidic residues-rich tracts occupy residues 92–115 (WEQHEEYQKAENPEQQLKQEKAQR) and 159–172 (QEGHLKHLEQREGQ). Low complexity predominate over residues 189-211 (QKGQLELPEQQEGQLELPEQQEG). Basic and acidic residues-rich tracts occupy residues 212–231 (QLKHLEQQEGQLKHLEHQEG), 252–264 (QLKHLDQQEKQPE), and 274–320 (KHLE…EHQE). The segment covering 321–334 (GQLGLPEQQVQQLK) has biased composition (low complexity). Basic and acidic residues-rich tracts occupy residues 335–353 (QLEKEEGQPKHLEEEEGQL), 404–420 (GQLKHLEEQEGQLKHLE), 454–463 (QLKHLEKQEA), 476–486 (KHLEQQEKQLE), and 494–510 (QLKHLEQQEGQLKDLEQ).

It belongs to the involucrin family. As to quaternary structure, directly or indirectly cross-linked to cornifelin (CNFN). Substrate of transglutaminase. Specific glutamines or lysines are cross-linked to keratins, desmoplakin and to inter involucrin molecules. In terms of tissue distribution, keratinocytes of epidermis and other stratified squamous epithelia.

The protein resides in the cytoplasm. Functionally, part of the insoluble cornified cell envelope (CE) of stratified squamous epithelia. The polypeptide is Involucrin (IVL) (Pan paniscus (Pygmy chimpanzee)).